The sequence spans 455 residues: 5'-nucleotidase domain-containing protein 1 (455 aa).

Catalysis depends on aspartate 16, which acts as the Nucleophile. Positions 16 and 18 each coordinate Mg(2+). Catalysis depends on aspartate 18, which acts as the Proton donor. N6-acetyllysine is present on lysine 171. Mg(2+) is bound at residue aspartate 313. A compositionally biased stretch (basic and acidic residues) spans 339 to 364 (GDEGTRSQRPEESEPLEKKGKYEGPK). The tract at residues 339–368 (GDEGTRSQRPEESEPLEKKGKYEGPKAKPL) is disordered.

Belongs to the 5'(3')-deoxyribonucleotidase family.

The chain is 5'-nucleotidase domain-containing protein 1 (NT5DC1) from Homo sapiens (Human).